A 573-amino-acid polypeptide reads, in one-letter code: Anti-Muellerian hormone type-2 receptor (573 aa).

The first 17 residues, 1 to 17 (MLGSLGLWALLPTAVEA), serve as a signal peptide directing secretion. Over 18-149 (PPNRRTCVFF…APGESIWMAL (132 aa)) the chain is Extracellular. Intrachain disulfides connect Cys-55–Cys-79 and Cys-92–Cys-109. N-linked (GlcNAc...) asparagine glycosylation occurs at Asn-66. Asn-119 is a glycosylation site (N-linked (GlcNAc...) asparagine). Residues 150-170 (VLLGLFLLLLLLLGSIILALL) form a helical membrane-spanning segment. Residues 171–573 (QRKNYRVRGE…PQPACTLSPV (403 aa)) are Cytoplasmic-facing. In terms of domain architecture, Protein kinase spans 203 to 518 (LCFSQVIREG…AHPQESHPFP (316 aa)). Residues 209–217 (IREGGHAVV) and Lys-230 contribute to the ATP site. Asp-333 serves as the catalytic Proton acceptor.

Belongs to the protein kinase superfamily. TKL Ser/Thr protein kinase family. TGFB receptor subfamily. Interacts with type I receptor ACVR1. Mg(2+) is required as a cofactor. The cofactor is Mn(2+).

The protein localises to the membrane. It catalyses the reaction L-threonyl-[receptor-protein] + ATP = O-phospho-L-threonyl-[receptor-protein] + ADP + H(+). The enzyme catalyses L-seryl-[receptor-protein] + ATP = O-phospho-L-seryl-[receptor-protein] + ADP + H(+). In terms of biological role, on ligand binding, forms a receptor complex consisting of two type II and two type I transmembrane serine/threonine kinases. Type II receptors phosphorylate and activate type I receptors which autophosphorylate, then bind and activate SMAD transcriptional regulators. Receptor for anti-Muellerian hormone. The chain is Anti-Muellerian hormone type-2 receptor (AMHR2) from Homo sapiens (Human).